The sequence spans 483 residues: MGLFDFSVKELHDKLVKKEITPFDLVTESFNRIEAVEDKVGSFITLNKETALGVAEELGDAGIDPNNMLAGLPIGIKDNIVTKNLRTTAASKILENFDPIYDATVVSKLKNAQTINIGKLNMDEFAMGSSTETSYFHKTHNPWDLSRVPGGSSGGSASAVAAGEVLFSLGSDTGGSIRQPAAFCGVVGMKPTYGRVSRFGLIAFASSLDQIGPITKNVEDNAYLLEAISGLDANDSTSINQPVERFSDSLTGDIKGLRIGVPKEYLGEGVDPGVKQAVLDALKTLEKLGATWDEVSLPHSEYGVASYYILASSEASSNLSRFDGVRYGYRSPNATTLEELYTKTRSEGFGDEVKRRIMLGTYALSSGYYDAYYKKAQQARTLIKQDFVDVFKNYDVIIGPSSPTTAFKIDGMINDPITMYSNDILTVPINLAGVPAISVPCGFSEGLPVGLQIIGNYFEESLLYKVAHAFEQETTFHKEKPNL.

Residues Lys-77 and Ser-152 each act as charge relay system in the active site. The Acyl-ester intermediate role is filled by Ser-176.

The protein belongs to the amidase family. GatA subfamily. Heterotrimer of A, B and C subunits.

The catalysed reaction is L-glutamyl-tRNA(Gln) + L-glutamine + ATP + H2O = L-glutaminyl-tRNA(Gln) + L-glutamate + ADP + phosphate + H(+). Its function is as follows. Allows the formation of correctly charged Gln-tRNA(Gln) through the transamidation of misacylated Glu-tRNA(Gln) in organisms which lack glutaminyl-tRNA synthetase. The reaction takes place in the presence of glutamine and ATP through an activated gamma-phospho-Glu-tRNA(Gln). The protein is Glutamyl-tRNA(Gln) amidotransferase subunit A of Listeria innocua serovar 6a (strain ATCC BAA-680 / CLIP 11262).